We begin with the raw amino-acid sequence, 462 residues long: Glycine--tRNA ligase (462 aa).

2 residues coordinate substrate: Arg-98 and Glu-174. Residues 206–208 (RNE), 216–221 (FRTREF), 290–291 (EL), and 334–337 (GADR) contribute to the ATP site. Residue 221–225 (FEQME) coordinates substrate. 330 to 334 (EPSLG) is a binding site for substrate.

The protein belongs to the class-II aminoacyl-tRNA synthetase family. Homodimer.

It localises to the cytoplasm. It carries out the reaction tRNA(Gly) + glycine + ATP = glycyl-tRNA(Gly) + AMP + diphosphate. In terms of biological role, catalyzes the attachment of glycine to tRNA(Gly). This is Glycine--tRNA ligase from Lachnospira eligens (strain ATCC 27750 / DSM 3376 / VPI C15-48 / C15-B4) (Eubacterium eligens).